Here is a 591-residue protein sequence, read N- to C-terminus: Zinc finger protein 48 (591 aa).

Met-1 carries the N-acetylmethionine modification. 2 disordered regions span residues 1–24 (MEAS…IKEE) and 55–80 (GLGK…GSND). 2 stretches are compositionally biased toward basic and acidic residues: residues 8 to 24 (EFEH…IKEE) and 55 to 65 (GLGKRQPRDPV). The residue at position 12 (Ser-12) is a Phosphoserine. Residue Lys-58 forms a Glycyl lysine isopeptide (Lys-Gly) (interchain with G-Cter in SUMO2) linkage. 2 consecutive C2H2-type zinc fingers follow at residues 83 to 105 (AVCG…QRTH) and 111 to 133 (YKCG…QRTH). A disordered region spans residues 131-160 (RTHTGEKAYRVRPPAPGPPKMPRSRIPAGE). Lys-150 is covalently cross-linked (Glycyl lysine isopeptide (Lys-Gly) (interchain with G-Cter in SUMO2)). 2 consecutive C2H2-type zinc fingers follow at residues 163–185 (TICG…QRTH) and 191–213 (YKCG…QRTH). The disordered stretch occupies residues 206-241 (RIKHQRTHRGDQLPRPVVPRRQPSPAAPAAPHRPKA). Positions 224–235 (PRRQPSPAAPAA) are enriched in low complexity. A Glycyl lysine isopeptide (Lys-Gly) (interchain with G-Cter in SUMO2) cross-link involves residue Lys-240. 2 consecutive C2H2-type zinc fingers follow at residues 246–268 (YICT…QRSH) and 274–296 (FGCD…LRVH). Lys-300 participates in a covalent cross-link: Glycyl lysine isopeptide (Lys-Gly) (interchain with G-Cter in SUMO2). 2 C2H2-type zinc fingers span residues 302–324 (YLCP…LRTH) and 330–352 (HACP…RLTH). The disordered stretch occupies residues 372–429 (PPPPPLGTSPSLTPRSPSHSSDGPFGLPGLEPEPGGPQAGEPPPPLAGDKPHKCPECG). A compositionally biased stretch (low complexity) spans 379 to 404 (TSPSLTPRSPSHSSDGPFGLPGLEPE). The segment at 423–445 (HKCPECGKGFRRSSDLVKHHRVH) adopts a C2H2-type 9 zinc-finger fold. Residue Lys-449 forms a Glycyl lysine isopeptide (Lys-Gly) (interchain with G-Cter in SUMO2) linkage. Residues 451 to 473 (YLCPECGKGFADSSARVKHLRTH) form a C2H2-type 10 zinc finger. A disordered region spans residues 464–512 (SARVKHLRTHQGERTRPPPPPSTLLRPHNPPGSVPIVPQSRVQGRPSGP). Positions 480-496 (PPPPPSTLLRPHNPPGS) are enriched in pro residues. 2 consecutive C2H2-type zinc fingers follow at residues 516–538 (HVCG…RRTH) and 544–566 (YKCA…QRGH). A disordered region spans residues 564-591 (RGHLALKPFGVGDGPPRPLKEESPAGLE). Residues 581 to 591 (PLKEESPAGLE) are compositionally biased toward basic and acidic residues. Residue Lys-583 forms a Glycyl lysine isopeptide (Lys-Gly) (interchain with G-Cter in SUMO2) linkage.

Belongs to the krueppel C2H2-type zinc-finger protein family.

It localises to the nucleus. Functionally, may be involved in transcriptional regulation. This chain is Zinc finger protein 48 (Znf48), found in Mus musculus (Mouse).